The chain runs to 63 residues: Large ribosomal subunit protein uL30 (63 aa).

The protein belongs to the universal ribosomal protein uL30 family. Part of the 50S ribosomal subunit.

The polypeptide is Large ribosomal subunit protein uL30 (Caulobacter sp. (strain K31)).